Reading from the N-terminus, the 377-residue chain is Nitric oxide reductase FlRd-NAD(+) reductase (377 aa).

The protein belongs to the FAD-dependent oxidoreductase family. FAD is required as a cofactor.

It localises to the cytoplasm. It catalyses the reaction 2 reduced [nitric oxide reductase rubredoxin domain] + NAD(+) + H(+) = 2 oxidized [nitric oxide reductase rubredoxin domain] + NADH. Its pathway is nitrogen metabolism; nitric oxide reduction. In terms of biological role, one of at least two accessory proteins for anaerobic nitric oxide (NO) reductase. Reduces the rubredoxin moiety of NO reductase. This is Nitric oxide reductase FlRd-NAD(+) reductase from Escherichia coli (strain K12 / MC4100 / BW2952).